Reading from the N-terminus, the 342-residue chain is (Lyso)-N-acylphosphatidylethanolamine lipase (342 aa).

The AB hydrolase-1 domain maps to 70–324; the sequence is PLVMVHGFGG…IEGASHHVYA (255 aa).

This sequence belongs to the peptidase S33 family. ABHD4/ABHD5 subfamily.

The enzyme catalyses N-hexadecanoyl-1,2-di-(9Z-octadecenoyl)-sn-glycero-3-phosphoethanolamine + H2O = N-hexadecanoyl-1-(9Z-octadecenoyl)-sn-glycero-3-phosphoethanolamine + (9Z)-octadecenoate + H(+). It carries out the reaction an N-acyl-1,2-diacyl-sn-glycero-3-phosphoethanolamine + H2O = N,1-diacyl-sn-glycero-3-phosphoethanolamine + a fatty acid + H(+). It catalyses the reaction N-hexadecanoyl-1-(9Z-octadecenoyl)-sn-glycero-3-phosphoethanolamine + H2O = N-hexadecanoyl-sn-glycero-3-phosphoethanolamine + (9Z)-octadecenoate + H(+). The catalysed reaction is N-octadecanoyl-1-(9Z-octadecenoyl)-sn-glycero-3-phosphoethanolamine + H2O = N-octadecanoyl-sn-glycero-3-phospho-ethanolamine + (9Z)-octadecenoate + H(+). The enzyme catalyses N-eicosanoyl-1-(9Z-octadecenoyl)-sn-glycero-3-phosphoethanolamine + H2O = N-eicosanoyl-sn-glycero-3-phosphoethanolamine + (9Z)-octadecenoate + H(+). It carries out the reaction N,1-di-(9Z-octadecenoyl)-sn-glycero-3-phosphoethanolamine + H2O = N-(9Z-octadecenoyl)-sn-glycero-3-phosphoethanolamine + (9Z)-octadecenoate + H(+). It catalyses the reaction N-(5Z,8Z,11Z,14Z-eicosatetraenoyl)-1-(9Z-octadecenoyl)-sn-glycero-3-phosphoethanolamine + H2O = N-(5Z,8Z,11Z,14Z-eicosatetraenoyl)-sn-glycero-3-phosphoethanolamine + (9Z)-octadecenoate + H(+). The catalysed reaction is 1-octadecanoyl-2-(9Z-octadecenoyl)-sn-glycero-3-phospho-(N-hexadecanoyl)-serine + H2O = 1-octadecanoyl-2-hydroxy-sn-glycero-3-phospho-(N-hexadecanoyl)-serine + (9Z)-octadecenoate + H(+). The enzyme catalyses 1-O-(1Z-octadecenoyl)-2-(9Z-octadecenoyl)-sn-glycero-3-phospho-N-hexadecanoyl-ethanolamine + H2O = 1-O-(1Z-octadecenyl)-sn-glycero-3-phospho-N-hexadecanoyl-ethanolamine + (9Z)-octadecenoate + H(+). It carries out the reaction N,1-diacyl-sn-glycero-3-phosphoethanolamine + H2O = N-acyl-sn-glycero-3-phosphoethanolamine + a fatty acid + H(+). Its function is as follows. Lysophospholipase selective for N-acyl phosphatidylethanolamine (NAPE). Contributes to the biosynthesis of N-acyl ethanolamines, including the endocannabinoid anandamide by hydrolyzing the sn-1 and sn-2 acyl chains from N-acyl phosphatidylethanolamine (NAPE) generating glycerophospho-N-acyl ethanolamine (GP-NAE), an intermediate for N-acyl ethanolamine biosynthesis. Hydrolyzes substrates bearing saturated, monounsaturated, polyunsaturated N-acyl chains. Shows no significant activity towards other lysophospholipids, including lysophosphatidylcholine, lysophosphatidylethanolamine and lysophosphatidylserine. This Bos taurus (Bovine) protein is (Lyso)-N-acylphosphatidylethanolamine lipase.